Consider the following 412-residue polypeptide: Phosphoglycerate kinase (412 aa).

Substrate contacts are provided by residues 24-26 (DLN), Arg47, 70-73 (HLGR), Arg130, and Arg167. Residues Lys217, Gly312, Glu343, and 369 to 372 (GGDS) each bind ATP.

Belongs to the phosphoglycerate kinase family. In terms of assembly, monomer.

Its subcellular location is the cytoplasm. It carries out the reaction (2R)-3-phosphoglycerate + ATP = (2R)-3-phospho-glyceroyl phosphate + ADP. Its pathway is carbohydrate degradation; glycolysis; pyruvate from D-glyceraldehyde 3-phosphate: step 2/5. The protein is Phosphoglycerate kinase of Kineococcus radiotolerans (strain ATCC BAA-149 / DSM 14245 / SRS30216).